Consider the following 861-residue polypeptide: MKNDNRIIKNTIKQFKEKLCKDFSQKANITSITRKLAVFIDTILIQLFIKNKLHFGDNFCLLALGSYGRRELQLHSDIDLLILHTEKVSNIQLQRAQKFIQDCWDVGLEVSHQITTVSSCANLASQDLSVISTIMDMFLLCGHGALMEELIYQTHTLHMWPSHQYFFAKLQEQQNRYAKYGETAYNLEPNIKNGPGGLRDLQILLSISKRHFKIKKLAEGIGYGFITDKEYEELKYCQNFLWRVRFALHMLAGKPEERLSFDYQVKLAQFFGYQDQSHILAIEQFMKDYFKVIKRNRELNEMLLQWFNETIVYHQKQKIIRLDDEFQLSNRFIEVRNNRVFKQNPQSILKLFYWLVKRPDIEGVRASTIRLIRESLFLMGKRFRESKETANIFINIFRTGNDPYDALQRMNRYGVLAHYLDCFATVTGQMQYDLFHAYTVDQHTLFVIRNISRFKKNEYAKQFPLCAKIISALEKPEILYLGALFHDIAKGRGGDHSELGAIEAQQFTQRHYMEAEDSKLIVWLVRYHLLMSQTAQRKDIYDPKTIEQFCQLLPHARYLDYLYLLTVADICGTNPTLWNAWKDSLLKELYHAAKTRLHKQQELLDEAALISIRKQYAMDILISDGISSRVIQDLWSQFKGKYFLHESPEVIARHTKAILNSKQFPVVIIMPHHSQGGTEVFIYMPHKDERFTITTSVLSNHHVTIQEAAIITCDNQFDLDTYIILDENNQAFLNEQRARDIQKSLCDHLANTGRLPAVSRRRLSRALTHFNVKTQINFIDDNTNHQTQLFLVTNDRPGLLATISRVFLTLNIHLHNAKIATAGERVEDMFYISNQTGYSLNHEEKTILKEKLILEISKSKY.

The segment at 1–321 is uridylyltransferase; that stretch reads MKNDNRIIKN…VYHQKQKIIR (321 aa). A uridylyl-removing region spans residues 322-678; the sequence is LDDEFQLSNR…IMPHHSQGGT (357 aa). In terms of domain architecture, HD spans 440 to 562; it reads VDQHTLFVIR…LPHARYLDYL (123 aa). ACT domains are found at residues 679-760 and 788-861; these read EVFI…AVSR and QLFL…KSKY.

The protein belongs to the GlnD family. Mg(2+) is required as a cofactor.

It carries out the reaction [protein-PII]-L-tyrosine + UTP = [protein-PII]-uridylyl-L-tyrosine + diphosphate. The enzyme catalyses [protein-PII]-uridylyl-L-tyrosine + H2O = [protein-PII]-L-tyrosine + UMP + H(+). Uridylyltransferase (UTase) activity is inhibited by glutamine, while glutamine activates uridylyl-removing (UR) activity. Modifies, by uridylylation and deuridylylation, the PII regulatory proteins (GlnB and homologs), in response to the nitrogen status of the cell that GlnD senses through the glutamine level. Under low glutamine levels, catalyzes the conversion of the PII proteins and UTP to PII-UMP and PPi, while under higher glutamine levels, GlnD hydrolyzes PII-UMP to PII and UMP (deuridylylation). Thus, controls uridylylation state and activity of the PII proteins, and plays an important role in the regulation of nitrogen assimilation and metabolism. The polypeptide is Bifunctional uridylyltransferase/uridylyl-removing enzyme (Legionella pneumophila (strain Paris)).